The sequence spans 685 residues: Sulfite reductase [ferredoxin], chloroplastic (685 aa).

Residues 1–51 constitute a chloroplast transit peptide; it reads MTTSFAAAALRDPKLQIPNYHGLRSSSAASSLSRNALSVPSSTRSSSLIRA. [4Fe-4S] cluster contacts are provided by C495, C501, C541, and C545. C545 is a siroheme binding site.

It belongs to the nitrite and sulfite reductase 4Fe-4S domain family. In terms of assembly, monomer. Interacts with ferredoxin. The cofactor is siroheme. Requires [4Fe-4S] cluster as cofactor. Post-translationally, phosphorylated; this phosphorylation reduces DNA-binding. In terms of tissue distribution, expressed in leaves, stems, and roots.

It is found in the plastid. Its subcellular location is the chloroplast stroma. It localises to the chloroplast nucleoid. The protein localises to the plastid stroma. The catalysed reaction is hydrogen sulfide + 6 oxidized [2Fe-2S]-[ferredoxin] + 3 H2O = sulfite + 6 reduced [2Fe-2S]-[ferredoxin] + 7 H(+). Essential protein with sulfite reductase activity required in assimilatory sulfate reduction pathway during both primary and secondary metabolism and thus involved in development and growth. Its function is as follows. DNA-binding protein that binds to both double-stranded and single-stranded DNA without significant sequence specificity to reversibly repress the transcriptional activity of chloroplast nucleoids by promoting DNA compaction and possibly regulate DNA replication. The chain is Sulfite reductase [ferredoxin], chloroplastic (SIR) from Pisum sativum (Garden pea).